We begin with the raw amino-acid sequence, 121 residues long: Small ribosomal subunit protein uS13 (121 aa).

Residues 95 to 121 are disordered; it reads LPVRGQNTKNNARTRKGKAVAIAGKKK. Basic residues predominate over residues 106–121; it reads ARTRKGKAVAIAGKKK.

This sequence belongs to the universal ribosomal protein uS13 family. As to quaternary structure, part of the 30S ribosomal subunit. Forms a loose heterodimer with protein S19. Forms two bridges to the 50S subunit in the 70S ribosome.

Functionally, located at the top of the head of the 30S subunit, it contacts several helices of the 16S rRNA. In the 70S ribosome it contacts the 23S rRNA (bridge B1a) and protein L5 of the 50S subunit (bridge B1b), connecting the 2 subunits; these bridges are implicated in subunit movement. Contacts the tRNAs in the A and P-sites. This Streptococcus thermophilus (strain CNRZ 1066) protein is Small ribosomal subunit protein uS13.